Here is a 695-residue protein sequence, read N- to C-terminus: Glycine--tRNA ligase beta subunit (695 aa).

This sequence belongs to the class-II aminoacyl-tRNA synthetase family. In terms of assembly, tetramer of two alpha and two beta subunits.

It localises to the cytoplasm. The enzyme catalyses tRNA(Gly) + glycine + ATP = glycyl-tRNA(Gly) + AMP + diphosphate. This chain is Glycine--tRNA ligase beta subunit, found in Lawsonia intracellularis (strain PHE/MN1-00).